A 486-amino-acid chain; its full sequence is Siroheme synthase (486 aa).

A precorrin-2 dehydrogenase /sirohydrochlorin ferrochelatase region spans residues 1 to 204; it reads MNYLPIFVDL…HQIEQAEALV (204 aa). NAD(+) contacts are provided by residues 22–23 and 43–44; these read HI and EK. Ser128 bears the Phosphoserine mark. The segment at 216–486 is uroporphyrinogen-III C-methyltransferase; the sequence is GEVSLVGAGP…NKETHWKQAA (271 aa). Pro225 serves as a coordination point for S-adenosyl-L-methionine. Catalysis depends on Asp248, which acts as the Proton acceptor. The active-site Proton donor is Lys270. S-adenosyl-L-methionine contacts are provided by residues 301–303, Val306, 331–332, Met383, and Gly412; these read GGD and TA.

In the N-terminal section; belongs to the precorrin-2 dehydrogenase / sirohydrochlorin ferrochelatase family. This sequence in the C-terminal section; belongs to the precorrin methyltransferase family.

The catalysed reaction is uroporphyrinogen III + 2 S-adenosyl-L-methionine = precorrin-2 + 2 S-adenosyl-L-homocysteine + H(+). The enzyme catalyses precorrin-2 + NAD(+) = sirohydrochlorin + NADH + 2 H(+). It catalyses the reaction siroheme + 2 H(+) = sirohydrochlorin + Fe(2+). The protein operates within cofactor biosynthesis; adenosylcobalamin biosynthesis; precorrin-2 from uroporphyrinogen III: step 1/1. Its pathway is cofactor biosynthesis; adenosylcobalamin biosynthesis; sirohydrochlorin from precorrin-2: step 1/1. It participates in porphyrin-containing compound metabolism; siroheme biosynthesis; precorrin-2 from uroporphyrinogen III: step 1/1. It functions in the pathway porphyrin-containing compound metabolism; siroheme biosynthesis; siroheme from sirohydrochlorin: step 1/1. The protein operates within porphyrin-containing compound metabolism; siroheme biosynthesis; sirohydrochlorin from precorrin-2: step 1/1. Multifunctional enzyme that catalyzes the SAM-dependent methylations of uroporphyrinogen III at position C-2 and C-7 to form precorrin-2 via precorrin-1. Then it catalyzes the NAD-dependent ring dehydrogenation of precorrin-2 to yield sirohydrochlorin. Finally, it catalyzes the ferrochelation of sirohydrochlorin to yield siroheme. This Actinobacillus pleuropneumoniae serotype 3 (strain JL03) protein is Siroheme synthase.